Here is a 137-residue protein sequence, read N- to C-terminus: Secreted RxLR effector protein 67 (137 aa).

The N-terminal stretch at 1-18 (MRLYILVLAAIAVTLVFA) is a signal peptide. Residues 32 to 61 (RALRQASITDEKSDDSLNAQAPPLSKSEKR) carry the RxLR-dEER motif. Positions 40-65 (TDEKSDDSLNAQAPPLSKSEKRLSRS) are disordered. The chain crosses the membrane as a helical span at residues 114 to 134 (WFVRMILEAGIFWAVFHCLSA).

Belongs to the RxLR effector family.

The protein resides in the secreted. Its subcellular location is the host cytoplasm. It is found in the host nucleus. The protein localises to the membrane. Effector that partially suppresses the tobacco programmed cell death induced by cell death-inducing proteins. This chain is Secreted RxLR effector protein 67, found in Plasmopara viticola (Downy mildew of grapevine).